The sequence spans 65 residues: Small ribosomal subunit protein bS21 (65 aa).

This sequence belongs to the bacterial ribosomal protein bS21 family.

In Acidobacterium capsulatum (strain ATCC 51196 / DSM 11244 / BCRC 80197 / JCM 7670 / NBRC 15755 / NCIMB 13165 / 161), this protein is Small ribosomal subunit protein bS21.